Reading from the N-terminus, the 204-residue chain is Bcl-2-like protein 10 (204 aa).

A BH1 motif is present at residues leucine 86–glycine 105. A required for Ca(2+) binding region spans residues tryptophan 118 to aspartate 133. Residues lysine 119, lysine 120, and lysine 128 each participate in a glycyl lysine isopeptide (Lys-Gly) (interchain with G-Cter in ubiquitin) cross-link. The BH2 motif lies at tryptophan 156–cysteine 167. The helical transmembrane segment at leucine 183 to tryptophan 200 threads the bilayer.

The protein belongs to the Bcl-2 family. As to quaternary structure, interacts with BAX. Interacts with BCL2 and BCL2L1/BCLX. Interacts with APAF1. Interacts with ITPR1, ITPR2 and ITPR3; the interaction with ITPR1 is increased in the presence of AHCLY1. Interacts with AHCYL1. Interacts with HIP1R (via ENTH and I/LWEQ domains). Interacts with CASP9. Interacts with BCL2L11/BIM. Interacts with BIK. Interacts with UBQLN4. Interacts with NME2/NM23-H2. Interacts with PMAIP1/NOXA. Interacts with TPX2. Interacts with UBQLN1; in the cytoplasm. Interacts (via BH1 domain) with BECN1. The cofactor is Ca(2+). Monoubiquitinated by UBQLN1; results in stabilization of BCL2L10 protein abundance and in relocalization from mitochondria to cytoplasm. In terms of tissue distribution, widely expressed in adult tissues. Preferentially expressed in lung, liver and kidney.

Its subcellular location is the mitochondrion. It localises to the nucleus membrane. The protein localises to the endoplasmic reticulum. It is found in the cytoplasm. The protein resides in the cytoskeleton. Its subcellular location is the spindle. Functionally, promotes cell survival by suppressing apoptosis induced by BAX but not BAK. Increases binding of AHCYL1/IRBIT to ITPR1. Reduces ITPR1-mediated calcium release from the endoplasmic reticulum cooperatively with AHCYL1/IRBIT under normal cellular conditions. Under apoptotic stress conditions, dissociates from ITPR1 and is displaced from mitochondria-associated endoplasmic reticulum membranes, leading to increased Ca(2+) transfer to mitochondria which promotes apoptosis. Required for the correct formation of the microtubule organizing center during oocyte cell division, potentially via regulation of protein abundance and localization of other microtubule organizing center components such as AURKA and TPX2. This is Bcl-2-like protein 10 from Homo sapiens (Human).